Reading from the N-terminus, the 207-residue chain is Small ribosomal subunit protein uS4 (207 aa).

Positions 35–54 (RPKPPGPQLGRPRRLSDRGQ) are disordered. Residues 97 to 163 (RRLDNVLFRL…AYFKTLAENI (67 aa)) form the S4 RNA-binding domain.

The protein belongs to the universal ribosomal protein uS4 family. Part of the 30S ribosomal subunit. Contacts protein S5. The interaction surface between S4 and S5 is involved in control of translational fidelity.

In terms of biological role, one of the primary rRNA binding proteins, it binds directly to 16S rRNA where it nucleates assembly of the body of the 30S subunit. Functionally, with S5 and S12 plays an important role in translational accuracy. In Dehalococcoides mccartyi (strain CBDB1), this protein is Small ribosomal subunit protein uS4.